The chain runs to 217 residues: Putative thymidylate synthase (217 aa).

Residue Cys139 is part of the active site.

This sequence belongs to the thymidylate synthase family. Archaeal-type ThyA subfamily. As to quaternary structure, monomer.

Its subcellular location is the cytoplasm. The protein operates within pyrimidine metabolism; dTTP biosynthesis. May catalyze the biosynthesis of dTMP using an unknown cosubstrate. In Methanosarcina acetivorans (strain ATCC 35395 / DSM 2834 / JCM 12185 / C2A), this protein is Putative thymidylate synthase.